Here is a 223-residue protein sequence, read N- to C-terminus: Pyridoxine/pyridoxamine 5'-phosphate oxidase (223 aa).

Residues 9–12 (RVGY) and lysine 76 contribute to the substrate site. Residues 71 to 76 (RTVLCK), 86 to 87 (FT), lysine 93, and glutamine 115 contribute to the FMN site. Residues tyrosine 133, arginine 137, and serine 141 each contribute to the substrate site. FMN-binding positions include 150–151 (QS) and tryptophan 196. Residue 202–204 (RMH) coordinates substrate. Residue arginine 206 coordinates FMN.

Belongs to the pyridoxamine 5'-phosphate oxidase family. Homodimer. The cofactor is FMN.

The enzyme catalyses pyridoxamine 5'-phosphate + O2 + H2O = pyridoxal 5'-phosphate + H2O2 + NH4(+). It catalyses the reaction pyridoxine 5'-phosphate + O2 = pyridoxal 5'-phosphate + H2O2. It participates in cofactor metabolism; pyridoxal 5'-phosphate salvage; pyridoxal 5'-phosphate from pyridoxamine 5'-phosphate: step 1/1. The protein operates within cofactor metabolism; pyridoxal 5'-phosphate salvage; pyridoxal 5'-phosphate from pyridoxine 5'-phosphate: step 1/1. Functionally, catalyzes the oxidation of either pyridoxine 5'-phosphate (PNP) or pyridoxamine 5'-phosphate (PMP) into pyridoxal 5'-phosphate (PLP). The chain is Pyridoxine/pyridoxamine 5'-phosphate oxidase from Rhodococcus jostii (strain RHA1).